A 449-amino-acid chain; its full sequence is Phosphoglucosamine mutase (449 aa).

Ser100 serves as the catalytic Phosphoserine intermediate. Mg(2+)-binding residues include Ser100, Asp241, Asp243, and Asp245. Ser100 carries the post-translational modification Phosphoserine.

Belongs to the phosphohexose mutase family. It depends on Mg(2+) as a cofactor. Activated by phosphorylation.

The enzyme catalyses alpha-D-glucosamine 1-phosphate = D-glucosamine 6-phosphate. Its function is as follows. Catalyzes the conversion of glucosamine-6-phosphate to glucosamine-1-phosphate. In Clostridium botulinum (strain ATCC 19397 / Type A), this protein is Phosphoglucosamine mutase.